Here is a 381-residue protein sequence, read N- to C-terminus: MRCLVVLLAALALSQASGITRIPLHKGKTLRKALKERGLLEDFLQRQQYAVSSKYSSLGKVAREPLTSYLDSQYFGKIYIGTPPQEFTVVFDTGSSDLWVPSIYCKSNVCKNHHRFDPRKSSTFRNLGKPLSIHYGTGSMEGFLGYDTVTVSNIVDPNQTVGLSTEQPGEVFTYSEFDGILGLAYPSLASEYSVPVFDNMMDRHLVARDLFSVYMDRNGQGSMLTLGAIDPSYYTGSLHWVPVTLQQYWQFTVDSVTINGVAVACVGGCQAILDTGTSVLFGPSSDILKIQMAIGATENRYGEFDVNCGNLRSMPTVVFEINGRDYPLSPSAYTSKDQGFCTSGFQGDNNSELWILGDVFIREYYSVFDRANNRVGLAKAI.

Positions 1-16 (MRCLVVLLAALALSQA) are cleaved as a signal peptide. Residues 17-58 (SGITRIPLHKGKTLRKALKERGLLEDFLQRQQYAVSSKYSSL) constitute a propeptide, activation peptide. One can recognise a Peptidase A1 domain in the interval 74–378 (YFGKIYIGTP…DRANNRVGLA (305 aa)). Asp-92 is an active-site residue. An intrachain disulfide couples Cys-105 to Cys-110. A glycan (N-linked (GlcNAc...) asparagine) is linked at Asn-158. A disulfide bridge connects residues Cys-265 and Cys-269. Asp-274 is a catalytic residue. Cys-308 and Cys-341 form a disulfide bridge. Asn-349 carries an N-linked (GlcNAc...) asparagine glycan.

Belongs to the peptidase A1 family.

The enzyme catalyses Broad specificity similar to that of pepsin A. Clots milk by cleavage of a single 104-Ser-Phe-|-Met-Ala-107 bond in kappa-chain of casein.. Its function is as follows. Chymosin is synthesized in the mucosa of the abomasum (fourth stomach) of young (unweaned) ruminants. The enzyme hydrolyzes casein to paracasein. In Camelus dromedarius (Dromedary), this protein is Chymosin.